Here is a 148-residue protein sequence, read N- to C-terminus: Small ribosomal subunit protein uS13 (148 aa).

A disordered region spans residues 128 to 148 (RGQRTKSTGRRGSTIGVRKKK).

It belongs to the universal ribosomal protein uS13 family. As to quaternary structure, part of the 30S ribosomal subunit. Forms a loose heterodimer with protein S19. Forms two bridges to the 50S subunit in the 70S ribosome.

Functionally, located at the top of the head of the 30S subunit, it contacts several helices of the 16S rRNA. In the 70S ribosome it contacts the 23S rRNA (bridge B1a) and protein L5 of the 50S subunit (bridge B1b), connecting the 2 subunits; these bridges are implicated in subunit movement. The chain is Small ribosomal subunit protein uS13 from Methanococcoides burtonii (strain DSM 6242 / NBRC 107633 / OCM 468 / ACE-M).